The primary structure comprises 119 residues: Toxin ICK-9 (119 aa).

The signal sequence occupies residues 1 to 19 (MMKLYSLVIIATLAAAAFA). 4 cysteine pairs are disulfide-bonded: cysteine 59/cysteine 74, cysteine 67/cysteine 80, cysteine 71/cysteine 116, and cysteine 73/cysteine 87.

It belongs to the neurotoxin 25 family. ICK-8 subfamily. In terms of tissue distribution, expressed by the venom gland.

It is found in the secreted. Its function is as follows. Ion channel inhibitor. This Trittame loki (Brush-footed trapdoor spider) protein is Toxin ICK-9.